We begin with the raw amino-acid sequence, 520 residues long: Translation initiation factor IF3-1, mitochondrial (520 aa).

Residues 1 to 66 (MAIWRIINRS…SNIFQNLRFL (66 aa)) constitute a mitochondrion transit peptide. Positions 271-282 (ARVKEESPKPDS) are enriched in basic and acidic residues. The segment at 271–520 (ARVKEESPKP…YGIFSTPKTK (250 aa)) is disordered. Polar residues predominate over residues 336 to 361 (EPQSPNQHVNPQRPRFSNQAPNQQPT). A compositionally biased stretch (pro residues) spans 369–379 (PNQPPSAPRPQ). 2 stretches are compositionally biased toward polar residues: residues 404 to 422 (NQAP…FPNQ) and 458 to 468 (FQNQAPNQQPT). Positions 473–485 (PQPPNPPRAPPRP) are enriched in pro residues.

Belongs to the IF-3 family. Monomer.

The protein localises to the mitochondrion. Its function is as follows. IF-3 binds to the 30S ribosomal subunit and shifts the equilibrium between 70S ribosomes and their 50S and 30S subunits in favor of the free subunits, thus enhancing the availability of 30S subunits on which protein synthesis initiation begins. This chain is Translation initiation factor IF3-1, mitochondrial, found in Arabidopsis thaliana (Mouse-ear cress).